The following is a 279-amino-acid chain: Ribonuclease Z (279 aa).

Histidine 61, histidine 63, aspartate 65, histidine 66, histidine 153, aspartate 176, and histidine 240 together coordinate Zn(2+). Aspartate 65 acts as the Proton acceptor in catalysis.

Belongs to the RNase Z family. Homodimer. The cofactor is Zn(2+).

The catalysed reaction is Endonucleolytic cleavage of RNA, removing extra 3' nucleotides from tRNA precursor, generating 3' termini of tRNAs. A 3'-hydroxy group is left at the tRNA terminus and a 5'-phosphoryl group is left at the trailer molecule.. Zinc phosphodiesterase, which displays some tRNA 3'-processing endonuclease activity. Probably involved in tRNA maturation, by removing a 3'-trailer from precursor tRNA. The polypeptide is Ribonuclease Z (Mycobacterium marinum (strain ATCC BAA-535 / M)).